Consider the following 302-residue polypeptide: Serine/threonine-protein phosphatase alpha-3 isoform (302 aa).

The Mn(2+) site is built by aspartate 62, histidine 64, aspartate 90, and asparagine 122. Histidine 123 (proton donor) is an active-site residue. Mn(2+) is bound by residues histidine 171 and histidine 246.

It belongs to the PPP phosphatase family. PP-1 subfamily. As to quaternary structure, interacts with Nop17l. Mn(2+) serves as cofactor.

It catalyses the reaction O-phospho-L-seryl-[protein] + H2O = L-seryl-[protein] + phosphate. The enzyme catalyses O-phospho-L-threonyl-[protein] + H2O = L-threonyl-[protein] + phosphate. The chain is Serine/threonine-protein phosphatase alpha-3 isoform (Pp1-13C) from Drosophila melanogaster (Fruit fly).